We begin with the raw amino-acid sequence, 1238 residues long: Cullin-associated NEDD8-dissociated protein 1 (1238 aa).

HEAT repeat units lie at residues 41–78, 126–167, 171–208, 210–247, and 251–292; these read TYEN…RVKD, LVIK…KYGS, GDLE…PSPD, LFNS…SSGY, and KYLP…KCQK. A disordered region spans residues 315–354; that stretch reads YSDDGEGEEDGDEEEEEMETSGDNDEEQEEEEEEEDLSDD. HEAT repeat units follow at residues 382-419, 432-469, 603-641, 646-683, 688-725, 853-890, 933-966, 967-1004, and 1008-1045; these read ELYQ…QLNK, QQVP…IIPG, EIQS…SSIN, SILP…VCPN, SLLT…NYSE, HENE…CSLQ, PFLQ…KLSM, IEPN…ENKE, and QYLA…NKPN.

This sequence belongs to the CAND family.

It is found in the nucleus. Its function is as follows. Key assembly factor of SCF (SKP1-CUL1-F-box protein) E3 ubiquitin ligase complexes that promotes the exchange of the substrate-recognition F-box subunit in SCF complexes, thereby playing a key role in the cellular repertoire of SCF complexes. Acts as a F-box protein exchange factor. This is Cullin-associated NEDD8-dissociated protein 1 (cand1) from Dictyostelium discoideum (Social amoeba).